The sequence spans 221 residues: uncharacterized protein (221 aa).

This is an uncharacterized protein from Shigella flexneri.